The following is a 203-amino-acid chain: Transmembrane protein 269 (203 aa).

Helical transmembrane passes span 60–80 (GLASALLLGVDGLLSGILAII), 124–144 (FILCCMASLMILFMMDQSYYP), and 157–177 (LVYIGGVIMLFFSPLSLSAFY).

The protein resides in the membrane. The sequence is that of Transmembrane protein 269 from Homo sapiens (Human).